Consider the following 498-residue polypeptide: ATP synthase subunit beta, chloroplastic (498 aa).

Residue 172–179 coordinates ATP; it reads GGAGVGKT.

The protein belongs to the ATPase alpha/beta chains family. In terms of assembly, F-type ATPases have 2 components, CF(1) - the catalytic core - and CF(0) - the membrane proton channel. CF(1) has five subunits: alpha(3), beta(3), gamma(1), delta(1), epsilon(1). CF(0) has four main subunits: a(1), b(1), b'(1) and c(9-12).

It localises to the plastid. The protein localises to the chloroplast thylakoid membrane. It carries out the reaction ATP + H2O + 4 H(+)(in) = ADP + phosphate + 5 H(+)(out). Functionally, produces ATP from ADP in the presence of a proton gradient across the membrane. The catalytic sites are hosted primarily by the beta subunits. The protein is ATP synthase subunit beta, chloroplastic of Brasenia schreberi (Water shield).